The chain runs to 259 residues: Probable ABC transporter arginine-binding protein ArtJ (259 aa).

The signal sequence occupies residues 1–25 (MIKQIGRFFRAFIFIMPLSLTSCES). Residues asparagine 38, glutamate 45, alanine 96, glycine 97, serine 99, arginine 104, and phenylalanine 149 each contribute to the L-arginine site.

The protein belongs to the bacterial solute-binding protein 3 family.

The protein localises to the secreted. It is found in the cell surface. Probably part of an ABC transporter complex involved in arginine transport. Binds arginine. Interacts with host epithelial cells, suggesting a role in host-cell adhesion during infection. This Chlamydia pneumoniae (Chlamydophila pneumoniae) protein is Probable ABC transporter arginine-binding protein ArtJ.